The following is a 127-amino-acid chain: Holo-[acyl-carrier-protein] synthase (127 aa).

Residues aspartate 7 and glutamate 53 each contribute to the Mg(2+) site.

This sequence belongs to the P-Pant transferase superfamily. AcpS family. Mg(2+) is required as a cofactor.

It localises to the cytoplasm. It catalyses the reaction apo-[ACP] + CoA = holo-[ACP] + adenosine 3',5'-bisphosphate + H(+). Its function is as follows. Transfers the 4'-phosphopantetheine moiety from coenzyme A to a Ser of acyl-carrier-protein. In Herpetosiphon aurantiacus (strain ATCC 23779 / DSM 785 / 114-95), this protein is Holo-[acyl-carrier-protein] synthase.